A 279-amino-acid chain; its full sequence is Thymidylate synthase (279 aa).

141 to 142 is a binding site for dUMP; the sequence is RR. The active-site Nucleophile is Cys-161. Residues 181 to 184, Asn-192, and 222 to 224 contribute to the dUMP site; these read RSND and HVY. Asp-184 is a binding site for (6R)-5,10-methylene-5,6,7,8-tetrahydrofolate. Position 278 (Ala-278) interacts with (6R)-5,10-methylene-5,6,7,8-tetrahydrofolate.

The protein belongs to the thymidylate synthase family. Bacterial-type ThyA subfamily. In terms of assembly, homodimer.

It localises to the cytoplasm. It carries out the reaction dUMP + (6R)-5,10-methylene-5,6,7,8-tetrahydrofolate = 7,8-dihydrofolate + dTMP. It functions in the pathway pyrimidine metabolism; dTTP biosynthesis. Functionally, catalyzes the reductive methylation of 2'-deoxyuridine-5'-monophosphate (dUMP) to 2'-deoxythymidine-5'-monophosphate (dTMP) while utilizing 5,10-methylenetetrahydrofolate (mTHF) as the methyl donor and reductant in the reaction, yielding dihydrofolate (DHF) as a by-product. This enzymatic reaction provides an intracellular de novo source of dTMP, an essential precursor for DNA biosynthesis. The polypeptide is Thymidylate synthase (Bacillus mojavensis).